Consider the following 353-residue polypeptide: Photosystem II D2 protein (353 aa).

An N-acetylthreonine modification is found at T2. Phosphothreonine is present on T2. A helical transmembrane segment spans residues 41–61 (CAYFALGGWFTGTTFVTSWYT). H118 contacts chlorophyll a. The helical transmembrane segment at 125–141 (GFMLRQFELARSVQLRP) threads the bilayer. Positions 130 and 143 each coordinate pheophytin a. A helical membrane pass occupies residues 153–166 (VFVSVFLIYPLGQS). H198 contacts chlorophyll a. A helical membrane pass occupies residues 208-228 (AALLCAIHGATVENTLFEDGD). A plastoquinone contacts are provided by H215 and F262. H215 serves as a coordination point for Fe cation. Fe cation is bound at residue H269. The helical transmembrane segment at 279–295 (GLWMSAIGVVGLALNLR) threads the bilayer.

This sequence belongs to the reaction center PufL/M/PsbA/D family. As to quaternary structure, PSII is composed of 1 copy each of membrane proteins PsbA, PsbB, PsbC, PsbD, PsbE, PsbF, PsbH, PsbI, PsbJ, PsbK, PsbL, PsbM, PsbT, PsbX, PsbY, PsbZ, Psb30/Ycf12, at least 3 peripheral proteins of the oxygen-evolving complex and a large number of cofactors. It forms dimeric complexes. The cofactor is The D1/D2 heterodimer binds P680, chlorophylls that are the primary electron donor of PSII, and subsequent electron acceptors. It shares a non-heme iron and each subunit binds pheophytin, quinone, additional chlorophylls, carotenoids and lipids. There is also a Cl(-1) ion associated with D1 and D2, which is required for oxygen evolution. The PSII complex binds additional chlorophylls, carotenoids and specific lipids..

The protein resides in the plastid. It localises to the chloroplast thylakoid membrane. The enzyme catalyses 2 a plastoquinone + 4 hnu + 2 H2O = 2 a plastoquinol + O2. Photosystem II (PSII) is a light-driven water:plastoquinone oxidoreductase that uses light energy to abstract electrons from H(2)O, generating O(2) and a proton gradient subsequently used for ATP formation. It consists of a core antenna complex that captures photons, and an electron transfer chain that converts photonic excitation into a charge separation. The D1/D2 (PsbA/PsbD) reaction center heterodimer binds P680, the primary electron donor of PSII as well as several subsequent electron acceptors. D2 is needed for assembly of a stable PSII complex. This is Photosystem II D2 protein from Saccharum hybrid (Sugarcane).